The sequence spans 287 residues: tRNA pseudouridine synthase B (287 aa).

D37 serves as the catalytic Nucleophile.

It belongs to the pseudouridine synthase TruB family. Type 1 subfamily.

It catalyses the reaction uridine(55) in tRNA = pseudouridine(55) in tRNA. Functionally, responsible for synthesis of pseudouridine from uracil-55 in the psi GC loop of transfer RNAs. The chain is tRNA pseudouridine synthase B from Caldicellulosiruptor saccharolyticus (strain ATCC 43494 / DSM 8903 / Tp8T 6331).